Consider the following 792-residue polypeptide: Probable phosphoketolase (792 aa).

Belongs to the XFP family. Thiamine diphosphate is required as a cofactor.

The protein is Probable phosphoketolase of Brucella melitensis biotype 1 (strain ATCC 23456 / CCUG 17765 / NCTC 10094 / 16M).